Reading from the N-terminus, the 455-residue chain is MWGGRFSAKPAELMQAINVSIGFDKRLWAQDLAGSRAHARMLMNQGVIASHDGEEILEGLARVEDELLSGTFPFRDEYEDIHMNIEARLRELIGPTAGRLHTARSRNDQVAVDFRLWVRDACDRTVGQLEALQKALLTQAEAHAESLMPGFTHLQPAQPVTFGHHLMAYVEMFGRDAGRFRDARARMNECPLGAAALAGSPFPIDRQQTASALGFDRPTANSLDSVSSRDFALEALSAASITATHLSRLAEEIVLWTTPMFGFIKLTDAFTTGSSIMPQKKNPDAAELIRAKVGRILGSLTTLTVVMKGLPLAYSKDMQEDKVPTFEAFDALELSLLAMAGMIADLTPNTENMAKAAGAGFSTATDLADWLVRTLNMPFRDAHHVTGSAVKTAEGLGVDLADLSLAQFQAIEPQITKEVYAVLTPAASAASRMSYGGTAPAQVRAQIARWKELLA.

It belongs to the lyase 1 family. Argininosuccinate lyase subfamily.

The protein localises to the cytoplasm. The catalysed reaction is 2-(N(omega)-L-arginino)succinate = fumarate + L-arginine. It participates in amino-acid biosynthesis; L-arginine biosynthesis; L-arginine from L-ornithine and carbamoyl phosphate: step 3/3. This Caulobacter vibrioides (strain ATCC 19089 / CIP 103742 / CB 15) (Caulobacter crescentus) protein is Argininosuccinate lyase.